A 214-amino-acid polypeptide reads, in one-letter code: Outer-membrane lipoprotein LolB (214 aa).

A signal peptide spans 1 to 25; it reads MNNLKRFTKSIFSCIALSGLLFLGG. Cys26 is lipidated: N-palmitoyl cysteine. Cys26 carries S-diacylglycerol cysteine lipidation.

It belongs to the LolB family. Monomer.

The protein resides in the cell outer membrane. Plays a critical role in the incorporation of lipoproteins in the outer membrane after they are released by the LolA protein. The protein is Outer-membrane lipoprotein LolB of Shewanella oneidensis (strain ATCC 700550 / JCM 31522 / CIP 106686 / LMG 19005 / NCIMB 14063 / MR-1).